A 409-amino-acid polypeptide reads, in one-letter code: Wadjet protein JetD (409 aa).

Component of antiplasmid transformation system Wadjet type I, composed of JetA, JetB, JetC and JetD. Expression of Wadjet type I in B.subtilis (strain BEST7003) reduces the transformation efficiency of plasmid pHCMC05. The sequence is that of Wadjet protein JetD from Bacillus cereus (strain Q1).